We begin with the raw amino-acid sequence, 119 residues long: MMVTLVTRKDIPPWVKVPEDLTDPEVFQVQSLVLKYLFGPQGSRMSHIEQVSQAMFELKNLESPEELIEVFIYGYQSIKVRAKWLLQSMAERYHLRQQKRPSLTTFWEFGGPDVSLKEC.

The region spanning 24 to 86 (PEVFQVQSLV…SIKVRAKWLL (63 aa)) is the KH; atypical domain.

Belongs to the KHDC1 family.

Its subcellular location is the cytoplasm. Functionally, involved in the maintenance of embryonic stem (ES) cell pluripotency. Dispensable for self-renewal of pluripotent ES cells and establishment of germ cells. Associates with specific target mRNAs. This chain is Developmental pluripotency-associated protein 5B/5C, found in Mus musculus (Mouse).